The following is an 88-amino-acid chain: Apolipoprotein C-I (88 aa).

The first 26 residues, 1–26, serve as a signal peptide directing secretion; that stretch reads MRLFIALPVLIVVVAMALEGPAPAQA.

The protein belongs to the apolipoprotein C1 family.

It localises to the secreted. In terms of biological role, inhibitor of lipoprotein binding to the low density lipoprotein (LDL) receptor, LDL receptor-related protein, and very low density lipoprotein (VLDL) receptor. Associates with high density lipoproteins (HDL) and the triacylglycerol-rich lipoproteins in the plasma and makes up about 10% of the protein of the VLDL and 2% of that of HDL. Appears to interfere directly with fatty acid uptake and is also the major plasma inhibitor of cholesteryl ester transfer protein (CETP). Binds free fatty acids and reduces their intracellular esterification. Modulates the interaction of APOE with beta-migrating VLDL and inhibits binding of beta-VLDL to the LDL receptor-related protein. The sequence is that of Apolipoprotein C-I (Apoc1) from Rattus norvegicus (Rat).